Reading from the N-terminus, the 602-residue chain is Toxin YwqJ (602 aa).

In terms of domain architecture, LXG spans 1-235; that stretch reads MSKVFESKSL…TTYIDAKTQQ (235 aa). 2 coiled-coil regions span residues 6-41 and 227-251; these read ESKS…VADL and TYID…EANK.

In the N-terminal section; belongs to the LXG family. Probably interacts with cognate immunity protein YwqK but not with non-cognate immunity proteins. The interaction inhibits the toxic activity of YwqJ.

The protein localises to the secreted. Functionally, toxic component of one of 6 LXG toxin-immunity modules in this strain. They promote kin selection, mediate competition in biofilms, and drive spatial segregation of different strains, indicating that LXG toxins may help avoid warfare between strains in biofilms. Mediates intercellular competition during biofilm formation; disruption of the operon disadvantages the bacteria, but overexpression of the cognate immunity protein restores growth in competition with wild-type. Overexpression alone in situ causes growth arrest but not cell lysis; no effect is seen on DNA or rRNA. Co-overexpression with cognate immunity protein YwqK does not cause growth arrest. The toxic effect is dependent on the epsA and tapA operons which are required for biofilm formation. Its toxic effects are probably neutralized by its cognate immunity protein YwqK, but not by immunity proteins specific to other toxins with the LXG domain. May have deaminase activity. This is Toxin YwqJ (ywqJ) from Bacillus subtilis (strain 168).